A 102-amino-acid polypeptide reads, in one-letter code: Phosphoribosyl-ATP pyrophosphatase (102 aa).

It belongs to the PRA-PH family.

It is found in the cytoplasm. It catalyses the reaction 1-(5-phospho-beta-D-ribosyl)-ATP + H2O = 1-(5-phospho-beta-D-ribosyl)-5'-AMP + diphosphate + H(+). It participates in amino-acid biosynthesis; L-histidine biosynthesis; L-histidine from 5-phospho-alpha-D-ribose 1-diphosphate: step 2/9. This chain is Phosphoribosyl-ATP pyrophosphatase, found in Jannaschia sp. (strain CCS1).